The following is a 493-amino-acid chain: EGF-containing fibulin-like extracellular matrix protein 1 (493 aa).

A signal peptide spans 1 to 17; that stretch reads MLQTLFLTMLTLALVKS. Residues 26 to 71 enclose the EGF-like 1; atypical domain; the sequence is YTQCTDGYEWDPIRQQCKDIDECDIVPDACKGGMKCVNHYGGYLCL. One can recognise an EGF-like 2; calcium-binding domain in the interval 173–213; it reads DIDECTSGTHNCRTDQVCINLRGSFTCQCLPGYQKRGEQCV. 15 cysteine pairs are disulfide-bonded: Cys-177–Cys-190, Cys-184–Cys-199, Cys-201–Cys-212, Cys-218–Cys-228, Cys-224–Cys-237, Cys-239–Cys-252, Cys-258–Cys-268, Cys-264–Cys-277, Cys-279–Cys-292, Cys-298–Cys-309, Cys-305–Cys-318, Cys-320–Cys-332, Cys-338–Cys-350, Cys-344–Cys-359, and Cys-365–Cys-377. Residues 214–253 enclose the EGF-like 3; calcium-binding domain; that stretch reads DIDECTVPPYCHQRCVNTPGSFYCQCSPGFQLAANNYTCV. An N-linked (GlcNAc...) asparagine glycan is attached at Asn-249. The EGF-like 4; calcium-binding domain maps to 254–293; it reads DINECDASNQCAQQCYNILGSFICQCNQGYELSSDRLNCE. The mediates interaction with TIMP3 stretch occupies residues 259–493; sequence DASNQCAQQC…LTIIVGPFSF (235 aa). In terms of domain architecture, EGF-like 5; calcium-binding spans 294-333; sequence DIDECRTSSYLCQYQCVNEPGKFSCMCPQGYEVVRSRTCQ. The region spanning 334 to 378 is the EGF-like 6; calcium-binding domain; that stretch reads DINECETTNECREDEMCWNYHGGFRCYPRNPCQDHYVLTSENRCV.

It belongs to the fibulin family. In terms of assembly, interacts with ECM1. Interacts with TIMP3. In terms of tissue distribution, expressed in the eye in the ciliary body, cornea, inner nuclear layer of the retina, and in the optic disk.

The protein localises to the secreted. Its subcellular location is the extracellular space. It localises to the extracellular matrix. In terms of biological role, binds EGFR, the EGF receptor, inducing EGFR autophosphorylation and the activation of downstream signaling pathways. May play a role in cell adhesion and migration. May function as a negative regulator of chondrocyte differentiation. In the olfactory epithelium, it may regulate glial cell migration, differentiation and the ability of glial cells to support neuronal neurite outgrowth. This chain is EGF-containing fibulin-like extracellular matrix protein 1 (Efemp1), found in Mus musculus (Mouse).